A 782-amino-acid polypeptide reads, in one-letter code: E3 UFM1-protein ligase 1 homolog (782 aa).

Positions 404 to 478 (NVSTQELEDE…SRGGGGASKK (75 aa)) are disordered.

This sequence belongs to the UFL1 family.

Functionally, E3 UFM1-protein ligase that mediates ufmylation of target proteins. The polypeptide is E3 UFM1-protein ligase 1 homolog (Drosophila melanogaster (Fruit fly)).